The primary structure comprises 2437 residues: Neurogenic locus notch homolog protein 1 (2437 aa).

The signal sequence occupies residues 1-20; that stretch reads MNRFLVKLTLLTAASLATVA. 4 EGF-like domains span residues 21–57, 58–98, 101–138, and 139–175; these read QGQR…AQCQ, FPNP…RLCL, VNHA…KTCQ, and LADP…QTCR. The Extracellular portion of the chain corresponds to 21-1726; sequence QGQRCSEYCQ…GGPPKTGEMY (1706 aa). Intrachain disulfides connect Cys25–Cys35, Cys29–Cys45, Cys47–Cys56, Cys62–Cys73, Cys67–Cys86, Cys88–Cys97, Cys105–Cys116, Cys110–Cys126, Cys128–Cys137, Cys143–Cys154, Cys148–Cys163, Cys165–Cys174, Cys181–Cys194, Cys188–Cys203, Cys205–Cys214, Cys221–Cys232, Cys226–Cys242, Cys244–Cys253, Cys260–Cys271, Cys265–Cys280, Cys282–Cys291, Cys298–Cys311, Cys305–Cys320, Cys322–Cys331, Cys338–Cys349, Cys343–Cys358, Cys360–Cys369, Cys375–Cys386, Cys380–Cys397, Cys399–Cys408, Cys415–Cys428, Cys422–Cys437, Cys439–Cys448, Cys455–Cys466, Cys460–Cys475, Cys477–Cys486, Cys493–Cys503, Cys498–Cys512, Cys514–Cys523, Cys530–Cys541, Cys535–Cys550, Cys552–Cys561, Cys568–Cys578, Cys573–Cys587, Cys589–Cys598, Cys605–Cys616, Cys610–Cys625, Cys627–Cys636, Cys643–Cys653, Cys648–Cys662, Cys664–Cys673, Cys680–Cys691, Cys685–Cys700, Cys702–Cys711, Cys718–Cys728, Cys723–Cys737, Cys739–Cys748, Cys755–Cys766, Cys760–Cys775, Cys777–Cys786, Cys793–Cys804, Cys798–Cys813, Cys815–Cys824, Cys831–Cys842, Cys836–Cys853, Cys855–Cys864, Cys871–Cys882, Cys876–Cys891, Cys893–Cys902, Cys909–Cys920, Cys914–Cys929, Cys931–Cys940, Cys947–Cys958, Cys952–Cys967, Cys969–Cys978, Cys985–Cys996, Cys990–Cys1005, Cys1007–Cys1016, Cys1023–Cys1034, Cys1028–Cys1043, Cys1045–Cys1054, Cys1061–Cys1072, Cys1066–Cys1081, Cys1083–Cys1092, Cys1099–Cys1120, Cys1114–Cys1129, Cys1131–Cys1140, Cys1147–Cys1158, Cys1152–Cys1167, Cys1169–Cys1178, Cys1185–Cys1196, Cys1190–Cys1205, Cys1207–Cys1216, Cys1223–Cys1242, Cys1236–Cys1251, Cys1253–Cys1262, Cys1269–Cys1282, Cys1274–Cys1291, Cys1293–Cys1302, Cys1309–Cys1320, Cys1314–Cys1332, Cys1334–Cys1343, Cys1350–Cys1361, Cys1355–Cys1370, Cys1372–Cys1381, Cys1389–Cys1400, Cys1394–Cys1411, Cys1413–Cys1422, Cys1447–Cys1470, Cys1452–Cys1465, and Cys1461–Cys1477. Residues 177–215 enclose the EGF-like 5; calcium-binding domain; sequence DVNECAVSPSPCRNGGTCINEVGSYLCRCPPEYTGPHCQ. Positions 217 to 254 constitute an EGF-like 6 domain; sequence LYQPCLPSPCRSGGTCVQTSDTTHTCSCLPGFTGQTCE. O-linked (Fuc...) threonine; alternate glycosylation is present at Thr231. O-linked (GalNAc...) threonine; alternate glycosylation is present at Thr231. One can recognise an EGF-like 7; calcium-binding domain in the interval 256 to 292; it reads NVDDCTQHACENGGPCIDGINTYNCHCDKHWTGQYCT. Residues 294 to 332 enclose the EGF-like 8; calcium-binding domain; the sequence is DVDECELSPNACQNGGTCHNTIGGFHCVCVNGWTGDDCS. Residues 334–370 enclose the EGF-like 9; calcium-binding domain; it reads NIDDCASAACSHGATCHDRVASFFCECPHGRTGLLCH. One can recognise an EGF-like 10 domain in the interval 371 to 409; it reads LDDACISNPCQKGSNCDTNPVSGKAICTCPPGYTGSACN. One can recognise an EGF-like 11; calcium-binding domain in the interval 411–449; sequence DIDECSLGANPCEHGGRCLNTKGSFQCKCLQGYEGPRCE. One can recognise an EGF-like 12; calcium-binding domain in the interval 451–487; that stretch reads DVNECKSNPCQNDATCLDQIGGFHCICMPGYEGVFCQ. The region spanning 489-524 is the EGF-like 13; calcium-binding domain; that stretch reads NSDDCASQPCLNGKCIDKINSFHCECPKGFSGSLCQ. One can recognise an EGF-like 14; calcium-binding domain in the interval 526 to 562; that stretch reads DVDECASTPCKNGAKCTDGPNKYTCECTPGFSGIHCE. The EGF-like 15; calcium-binding domain occupies 564–599; that stretch reads DINECASSPCHYGVCRDGVASFTCDCRPGYTGRLCE. The EGF-like 16; calcium-binding domain occupies 601-637; sequence NINECLSQPCRNGGTCQDRENAYICTCPKGTTGVNCE. The 36-residue stretch at 639–674 folds into the EGF-like 17; calcium-binding domain; it reads NIDDCKRKPCDYGKCIDKINGYECVCEPGYSGSMCN. The 37-residue stretch at 676 to 712 folds into the EGF-like 18; calcium-binding domain; it reads NIDDCALNPCHNGGTCIDGVNSFTCLCPDGFRDATCL. Positions 714-749 constitute an EGF-like 19; calcium-binding domain; it reads QHNECSSNPCIHGSCLDQINSYRCVCEAGWMGRNCD. Residues 751 to 787 enclose the EGF-like 20; calcium-binding domain; it reads NINECLSNPCVNGGTCKDMTSGYLCTCRAGFSGPNCQ. An EGF-like 21; calcium-binding domain is found at 789-825; the sequence is NINECASNPCLNQGSCIDDVAGFKCNCMLPYTGEVCE. The EGF-like 22 domain maps to 827–865; sequence VLAPCSPRPCKNGGVCRESEDFQSFSCNCPAGWQGQTCE. An EGF-like 23; calcium-binding domain is found at 867–903; it reads DINECVRNPCTNGGVCENLRGGFQCRCNPGFTGALCE. In terms of domain architecture, EGF-like 24; calcium-binding spans 905–941; it reads DIDDCEPNPCSNGGVCQDRVNGFVCVCLAGFRGERCA. Positions 943–979 constitute an EGF-like 25; calcium-binding domain; sequence DIDECVSAPCRNGGNCTDCVNSYTCSCPAGFSGINCE. Residue Asn957 is glycosylated (N-linked (GlcNAc...) asparagine). Residues 981 to 1017 enclose the EGF-like 26 domain; the sequence is NTPDCTESSCFNGGTCVDGISSFSCVCLPGFTGNYCQ. The EGF-like 27; calcium-binding domain occupies 1019-1055; sequence DVNECDSRPCQNGGSCQDGYGTYKCTCPHGYTGLNCQ. 2 consecutive EGF-like domains span residues 1057-1093 and 1095-1141; these read LVRW…IYCD and PSVS…SYCQ. The 37-residue stretch at 1143–1179 folds into the EGF-like 30; calcium-binding domain; that stretch reads QVDECQPNPCQNGATCTDYLGGYSCECVPGYHGMNCS. An N-linked (GlcNAc...) asparagine glycan is attached at Asn1177. The EGF-like 31; calcium-binding domain occupies 1181–1217; that stretch reads EINECLSQPCQNGGTCIDLVNTYKCSCPRGTQGVHCE. Positions 1219-1263 constitute an EGF-like 32; calcium-binding domain; it reads DIDDCSPSVDPLTGEPRCFNGGRCVDRVGGYGCVCPAGFVGERCE. EGF-like domains follow at residues 1265–1303, 1305–1344, 1346–1382, and 1385–1423; these read DVNE…KRCE, VFNG…SSCE, DSQS…HECQ, and MDSP…LLCH. An O-linked (Fuc...) threonine; alternate glycan is attached at Thr1399. An O-linked (GalNAc...) threonine; alternate glycan is attached at Thr1399. LNR repeat units lie at residues 1447–1487, 1488–1525, and 1526–1566; these read CEIA…PWQN, CSAA…LEGQ, and CNPL…VPQK. A glycan (N-linked (GlcNAc...) asparagine) is linked at Asn1487. 6 disulfides stabilise this stretch: Cys1488–Cys1512, Cys1494–Cys1507, Cys1503–Cys1519, Cys1526–Cys1552, Cys1534–Cys1547, and Cys1543–Cys1559. Asn1585 is a glycosylation site (N-linked (GlcNAc...) asparagine). Residues 1727-1747 traverse the membrane as a helical segment; that stretch reads PMFLVLLALAVLALAAVGVVV. At 1748–2437 the chain is on the cytoplasmic side; it reads SRKRKREHGQ…QMNHIPEAFK (690 aa). The segment at 1770 to 1790 is disordered; that stretch reads KKKRREPVGEDSVGLKPLKNS. ANK repeat units lie at residues 1867–1910, 1915–1944, 1948–1978, 1982–2011, 2015–2044, and 2048–2077; these read DGFT…NLHN, TGET…DANV, MGRT…DLDA, DGTT…DPNA, SGKS…NKDL, and KEET…NRDI. 2 disordered regions span residues 2127–2174 and 2356–2437; these read IKPS…GGIM and RMAP…EAFK. Over residues 2356 to 2387 the composition is skewed to polar residues; sequence RMAPPISSTQFLTPPSQHSYSNPMDNTPNHQQ. Over residues 2396–2411 the composition is skewed to low complexity; that stretch reads PSAGSPDQWSSSSPHS. Polar residues predominate over residues 2412-2429; it reads NLSDWSEGISSPPTSMQM.

It belongs to the NOTCH family. Post-translationally, synthesized in the endoplasmic reticulum as an inactive form which is proteolytically cleaved by a furin-like convertase in the trans-Golgi network before it reaches the plasma membrane to yield an active, ligand-accessible form. Cleavage results in a C-terminal fragment N(TM) and a N-terminal fragment N(EC). Following ligand binding, it is cleaved by adam17 to yield a membrane-associated intermediate fragment called notch extracellular truncation (NEXT). Following endocytosis, this fragment is then cleaved by presenilin dependent gamma-secretase to release a Notch-derived peptide containing the intracellular domain (NICD) from the membrane. O-glycosylated on the EGF-like domains. Contains both O-linked fucose and O-linked glucose. O-linked glycosylation by galnt11 is involved in determination of left/right symmetry: glycosylation promotes activation of notch1, possibly by promoting cleavage by adam17, modulating the balance between motile and immotile (sensory) cilia at the left-right organiser (LRO).

Its subcellular location is the cell membrane. It localises to the nucleus. Functionally, functions as a receptor for membrane-bound ligands Jagged-1 (JAG1), Jagged-2 (JAG2) and Delta-1 (DLL1) to regulate cell-fate determination. Upon ligand activation through the released notch intracellular domain (NICD) it forms a transcriptional activator complex with RBPJ/RBPSUH and activates genes of the enhancer of split locus. Affects the implementation of differentiation, proliferation and apoptotic programs. Involved in angiogenesis; negatively regulates endothelial cell proliferation and migration and angiogenic sprouting. Involved in the maturation of both CD4(+) and CD8(+) cells in the thymus. Important for follicular differentiation and possibly cell fate selection within the follicle. During cerebellar development, functions as a receptor for neuronal DNER and is involved in the differentiation of Bergmann glia. Represses neuronal and myogenic differentiation. May play an essential role in postimplantation development, probably in some aspect of cell specification and/or differentiation. May be involved in mesoderm development, somite formation and neurogenesis. Involved in determination of left/right symmetry by modulating the balance between motile and immotile (sensory) cilia at the left-right organiser (LRO). The polypeptide is Neurogenic locus notch homolog protein 1 (notch1a) (Danio rerio (Zebrafish)).